Here is a 60-residue protein sequence, read N- to C-terminus: uncharacterized protein (60 aa).

This is an uncharacterized protein from Escherichia coli (Bacteriophage T4).